Here is a 601-residue protein sequence, read N- to C-terminus: 1-deoxy-D-xylulose-5-phosphate synthase (601 aa).

Thiamine diphosphate is bound by residues histidine 63 and 104 to 106 (GHS). Aspartate 135 lines the Mg(2+) pocket. Thiamine diphosphate-binding positions include 136 to 137 (GS), asparagine 164, tyrosine 272, and glutamate 353. Asparagine 164 serves as a coordination point for Mg(2+).

Belongs to the transketolase family. DXPS subfamily. In terms of assembly, homodimer. It depends on Mg(2+) as a cofactor. Thiamine diphosphate is required as a cofactor.

The enzyme catalyses D-glyceraldehyde 3-phosphate + pyruvate + H(+) = 1-deoxy-D-xylulose 5-phosphate + CO2. It participates in metabolic intermediate biosynthesis; 1-deoxy-D-xylulose 5-phosphate biosynthesis; 1-deoxy-D-xylulose 5-phosphate from D-glyceraldehyde 3-phosphate and pyruvate: step 1/1. Its function is as follows. Catalyzes the acyloin condensation reaction between C atoms 2 and 3 of pyruvate and glyceraldehyde 3-phosphate to yield 1-deoxy-D-xylulose-5-phosphate (DXP). This Aliarcobacter butzleri (strain RM4018) (Arcobacter butzleri) protein is 1-deoxy-D-xylulose-5-phosphate synthase.